The following is a 316-amino-acid chain: Probable cell division protein WhiA (316 aa).

Residues 275 to 309 constitute a DNA-binding region (H-T-H motif); that stretch reads TLKELGEMVASGKISKSGINHRLRKLDEIAEQLRT.

The protein belongs to the WhiA family.

The protein resides in the cytoplasm. It is found in the nucleoid. Functionally, involved in cell division and chromosome segregation. May influence the activity of FtsZ. Binds DNA, but does not seem to function as a transcription factor. The sequence is that of Probable cell division protein WhiA from Bacillus subtilis (strain 168).